Here is a 476-residue protein sequence, read N- to C-terminus: Raffinose invertase (476 aa).

Substrate is bound by residues 35-38 (WMND), Gln54, 97-98 (FS), 159-160 (RD), Glu214, and Trp297. Asp38 is a catalytic residue.

The protein belongs to the glycosyl hydrolase 32 family. Homodimer.

The catalysed reaction is Hydrolysis of terminal non-reducing beta-D-fructofuranoside residues in beta-D-fructofuranosides.. Its function is as follows. May prevent the potential hasard of excessive sucrose accumulation. This Escherichia coli protein is Raffinose invertase (rafD).